The following is a 238-amino-acid chain: IkB-like protein (238 aa).

ANK repeat units lie at residues 47–76, 86–119, 123–152, and 157–186; these read NGSS…YPGE, DGNS…RICL, NGIT…DPTQ, and RGFT…KPLY. The short motif at 80-86 is the Nuclear localization signal element; the sequence is PHRRDKD. The Nuclear localization signal motif lies at 202 to 213; it reads KKKPKIIITGCK. A PxIxITxC motif; Interaction with host PPP3CA motif is present at residues 205 to 212; the sequence is PKIIITGC. Positions 227–230 match the FLCV motif motif; the sequence is FLCV.

This sequence belongs to the asfivirus A238L family. In terms of assembly, interacts with host PPIA. Interacts with host PPP3CA/Calcineurin. Interacts with host RELA/p65; interaction of the 32 kDa form with host RELA results in the formation of a stable complex with NF-kappa-B. Interacts with host PPP3R1. Interacts with host EP300; this interaction inhibits the association of host EP300 with host RELA, JUN and NFATC2. Post-translationally, the protein exists in a 28 kDa and a 32 kDa form, probably due to post-translational modifications which are neither phosphorylation, nor sumoylation.

It localises to the host nucleus. The protein resides in the host cytoplasm. IkB-like protein that inhibits the binding of NF-kappa-B to DNA, thereby downregulating pro-inflammatory cytokine production. Forms a heterodimer with the NF-kappa-B subunit RELA/p65 and prevents the activation of the NF-kappa-B transcription factor. Inhibits calcineurin function, which is required for the induction of nuclear factor of activated T cells (NFAT)-dependent immune response genes. Prevents the binding of substrates to calcineurin without affecting the phosphatase activity. Does not contain the serine residues that are phosphorylated by host IkB kinase and thus is not degraded following stimulation of the NFkB pathway. This is IkB-like protein (A238L) from African swine fever virus (isolate Warthog/Namibia/Wart80/1980) (ASFV).